The primary structure comprises 259 residues: Bisphosphoglycerate mutase (259 aa).

N-acetylserine is present on serine 2. Residues arginine 10–asparagine 17, cysteine 23–serine 24, arginine 62, glutamate 89–tyrosine 92, arginine 100, and arginine 116–arginine 117 each bind substrate. Histidine 11 serves as the catalytic Tele-phosphohistidine intermediate. Glutamate 89 serves as the catalytic Proton donor/acceptor. A Phosphothreonine modification is found at threonine 122. Glycine 189–asparagine 190 lines the substrate pocket.

This sequence belongs to the phosphoglycerate mutase family. BPG-dependent PGAM subfamily. As to quaternary structure, homodimer. Expressed in red blood cells. Expressed in placenta (labyrinthine trophoblasts).

It carries out the reaction (2R)-3-phospho-glyceroyl phosphate = (2R)-2,3-bisphosphoglycerate + H(+). The catalysed reaction is (2R)-2-phosphoglycerate = (2R)-3-phosphoglycerate. Its activity is regulated as follows. At alkaline pH BPGM favors the synthase reaction; however, at lower pH the phosphatase reaction is dominant. Inhibited by citrate. Plays a major role in regulating hemoglobin oxygen affinity by controlling the levels of its allosteric effector 2,3-bisphosphoglycerate (2,3-BPG). Also exhibits mutase (EC 5.4.2.11) activity. This Mus musculus (Mouse) protein is Bisphosphoglycerate mutase (Bpgm).